A 462-amino-acid polypeptide reads, in one-letter code: MSKGKLEQVSAACHHLGFFNNAGLSAHYKLSESSSPAVADLRGLVYAAAGDLLRKHRILFAIPVNEGTPNPHFACLPWIDLRRSIAFLERSVPLASAAEEQDKELDAILEEQHNIDFQTDYGTLPFWRLIILRSKGRNDFTASFIYHHAIGDGVSGLAFHKAFCNALEAASSSTLPTDRAENIIRPDENTVVLPPLEELHPMPISPRQPPLPTASPKEWTGASIHLPCKSRWASLYISPSASNAFVQECKEMKLSVTSALSSVVAAVLFDNLPSRVEALTCIIPVSVRPWLKLPPQVIDNAIGTYFDALRVRLTRAEQRSQDPSPVGIWCGARQVSRSINAYLCDVSPSGEPYTSVAAFKTVPDVSAVFRSTLGKPRDAAFEVTNVGLFPPAAIRRPSRWKAGNVLLSRSAAVPGAAVTVSVVTGRDGTMALGFSWQEGVVEDGFMHRVRQGVWKYFEKYQS.

It belongs to the alcohol acetyltransferase FCK4 family.

Its pathway is secondary metabolite biosynthesis. Its function is as follows. Probable alcohol acetyltransferase; part of the crm gene cluster that mediates the biosynthesis of a yet unidentified copper-responsive metabolite. In contrast to crmA, is not involved in the biosynthesis of fumivalines or fumicicolins. This is Probable alcohol acetyltransferase crmB from Aspergillus fumigatus (strain ATCC MYA-4609 / CBS 101355 / FGSC A1100 / Af293) (Neosartorya fumigata).